A 272-amino-acid chain; its full sequence is Putative protein-disulfide oxidoreductase RP025 (272 aa).

Positions 1-21 (MRNIFIVLIFLFLSNCSEVKA) are cleaved as a signal peptide. The region spanning 74–263 (DSREQKKPEI…ISKAVDKALD (190 aa)) is the Thioredoxin domain. A disulfide bond links Cys-116 and Cys-119.

The protein belongs to the thioredoxin family. DsbA subfamily.

Its subcellular location is the periplasm. May be required for disulfide bond formation in some proteins. This is Putative protein-disulfide oxidoreductase RP025 from Rickettsia prowazekii (strain Madrid E).